Reading from the N-terminus, the 829-residue chain is UBA domain-containing protein 8 (829 aa).

An EH 1 domain is found at E10–K109. Residues L43 to A78 enclose the EF-hand 1 domain. Positions G93–F121 are disordered. 2 positions are modified to phosphoserine: S112 and S113. 2 EH domains span residues E129–E225 and D300–T398. Residues L333–R368 form the EF-hand 2 domain. Polar residues-rich tracts occupy residues S466–I506 and T574–E590. 3 disordered regions span residues S466–S520, T574–L614, and K724–E785. The stretch at E602 to S709 forms a coiled coil. Pro residues predominate over residues T728 to T737. Residues H764–V774 show a composition bias toward polar residues. The span at S775–E785 shows a compositional bias: low complexity. One can recognise a UBA domain in the interval Q788 to S828.

The polypeptide is UBA domain-containing protein 8 (ucp8) (Schizosaccharomyces pombe (strain 972 / ATCC 24843) (Fission yeast)).